A 348-amino-acid chain; its full sequence is Type II methyltransferase M.BglI (348 aa).

It belongs to the N(4)/N(6)-methyltransferase family.

The enzyme catalyses a 2'-deoxycytidine in DNA + S-adenosyl-L-methionine = an N(4)-methyl-2'-deoxycytidine in DNA + S-adenosyl-L-homocysteine + H(+). A beta subtype methylase, recognizes the double-stranded sequence 5'-GCCNNNNNGGC-3', methylates C-2 on both strands, and protects the DNA from cleavage by the BglI endonuclease. This is Type II methyltransferase M.BglI (bglIM) from Bacillus subtilis.